The primary structure comprises 147 residues: Transthyretin (147 aa).

A signal peptide spans 1–20 (MASHRLLLLCLAGLVFVSEA). The residue at position 30 (C30) is a Sulfocysteine. K35 contacts L-thyroxine. At E62 the chain carries 4-carboxyglutamate. S72 is subject to Phosphoserine. E74 contributes to the L-thyroxine binding site. A glycan (N-linked (GlcNAc...) asparagine) is linked at N118. L-thyroxine is bound at residue S137.

The protein belongs to the transthyretin family. As to quaternary structure, homotetramer. Dimer of dimers. In the homotetramer, subunits assemble around a central channel that can accommodate two ligand molecules. Interacts with RBP4. Sulfonation of the reactive cysteine Cys-30 enhances the stability of the native conformation of TTR, avoiding misassembly of the protein leading to amyloid formation. As to expression, detected in liver.

The protein localises to the secreted. Thyroid hormone-binding protein. Probably transports thyroxine from the bloodstream to the brain. The sequence is that of Transthyretin (TTR) from Pongo abelii (Sumatran orangutan).